Reading from the N-terminus, the 483-residue chain is Probable glycine dehydrogenase (decarboxylating) subunit 2 (483 aa).

Lys264 carries the N6-(pyridoxal phosphate)lysine modification.

This sequence belongs to the GcvP family. C-terminal subunit subfamily. In terms of assembly, the glycine cleavage system is composed of four proteins: P, T, L and H. In this organism, the P 'protein' is a heterodimer of two subunits. Pyridoxal 5'-phosphate is required as a cofactor.

The catalysed reaction is N(6)-[(R)-lipoyl]-L-lysyl-[glycine-cleavage complex H protein] + glycine + H(+) = N(6)-[(R)-S(8)-aminomethyldihydrolipoyl]-L-lysyl-[glycine-cleavage complex H protein] + CO2. The glycine cleavage system catalyzes the degradation of glycine. The P protein binds the alpha-amino group of glycine through its pyridoxal phosphate cofactor; CO(2) is released and the remaining methylamine moiety is then transferred to the lipoamide cofactor of the H protein. The chain is Probable glycine dehydrogenase (decarboxylating) subunit 2 from Nitrosomonas eutropha (strain DSM 101675 / C91 / Nm57).